Reading from the N-terminus, the 200-residue chain is Recoverin (200 aa).

Gly2 carries N-myristoyl glycine lipidation. 4 EF-hand domains span residues 25–60, 61–96, 97–132, and 147–182; these read EEELCSWYQSFLKDCPTGRITQQQFQSIYAKFFPDT, DPKAYAQHVFRSFDSNLDGTLDFKEYVIALHMTTAG, KTNQKLEWAFSLYDVDGNGTISKNEVLEIVMAIFKM, and TPEKRAEKIWKYFGKNDDDKLTEKEFIEGTLANKEI. Position 39 is a cysteine sulfenic acid (-SOH) (Cys39). Ca(2+) is bound by residues Asp74, Asn76, Asp78, Thr80, Glu85, Asp110, Asp112, Asn114, Thr116, and Glu121. The interval 189–192 is interaction with GRK1; that stretch reads EPQK.

The protein belongs to the recoverin family. Homodimer; disulfide-linked. Homodimerization is caused by prolonged intense illumination. May form a complex composed of RHO, GRK1 and RCVRN in a Ca(2+)-dependent manner; RCVRN prevents the interaction between GRK1 and RHO. Interacts (via C-terminus) with GRK1 (via N-terminus); the interaction is Ca(2+)-dependent. The N-terminal glycine is linked to one of four different types of acyl groups. The most abundant is myristoleate (14:1), but 14:0, 14:2, and 12:0 acyl residues are also present. The Ca(2+) induced exposure of the myristoyl group, known as the calcium-myristoyl switch, promotes RCVRN binding to the photoreceptor cell membranes only when intracellular Ca(2+) concentration is high. Post-translationally, oxidation on Cys-39 occurs in response to prolonged intense illumination and results in the formation of disulfide homodimers, and to a lesser extent disulfide-linked heterodimers. In terms of tissue distribution, retina and pineal gland.

The protein resides in the photoreceptor inner segment. The protein localises to the cell projection. It localises to the cilium. It is found in the photoreceptor outer segment. Its subcellular location is the photoreceptor outer segment membrane. The protein resides in the perikaryon. Functionally, acts as a calcium sensor and regulates phototransduction of cone and rod photoreceptor cells. Modulates light sensitivity of cone photoreceptor in dark and dim conditions. In response to high Ca(2+) levels induced by low light levels, prolongs RHO/rhodopsin activation in rod photoreceptor cells by binding to and inhibiting GRK1-mediated phosphorylation of RHO/rhodopsin. Plays a role in scotopic vision/enhances vision in dim light by enhancing signal transfer between rod photoreceptors and rod bipolar cells. Improves rod photoreceptor sensitivity in dim light and mediates response of rod photoreceptors to facilitate detection of change and motion in bright light. The sequence is that of Recoverin (RCVRN) from Homo sapiens (Human).